A 287-amino-acid chain; its full sequence is Uroplakin-3a (287 aa).

Positions 1 to 18 (MPPLWALLALGCLRFGSA) are cleaved as a signal peptide. The Lumenal portion of the chain corresponds to 19–207 (VNLQPQLASV…DTWPGRRSGG (189 aa)). 3 N-linked (GlcNAc...) asparagine glycosylation sites follow: N74, N139, and N170. A helical membrane pass occupies residues 208 to 235 (MIVITSILGSLPFFLLVGFAGAIALSLV). The Cytoplasmic segment spans residues 236–287 (DMGSSDGETTHDSQITQEAVPKSLGASESSYTSVNRGPPLDRAEVYSSKLQD). The interval 242–287 (GETTHDSQITQEAVPKSLGASESSYTSVNRGPPLDRAEVYSSKLQD) is disordered. Residues 261 to 270 (ASESSYTSVN) are compositionally biased toward polar residues.

Belongs to the uroplakin-3 family. Heterodimer with uroplakin-1B (UPK1B). As to expression, expressed in ureter.

The protein resides in the endoplasmic reticulum membrane. In terms of biological role, component of the asymmetric unit membrane (AUM); a highly specialized biomembrane elaborated by terminally differentiated urothelial cells. May play an important role in AUM-cytoskeleton interaction in terminally differentiated urothelial cells. It also contributes to the formation of urothelial glycocalyx which may play an important role in preventing bacterial adherence. In Homo sapiens (Human), this protein is Uroplakin-3a (UPK3A).